The following is a 491-amino-acid chain: UDP-N-acetylmuramoyl-L-alanyl-D-glutamate--2,6-diaminopimelate ligase (491 aa).

Position 30 (S30) interacts with UDP-N-acetyl-alpha-D-muramoyl-L-alanyl-D-glutamate. 108–114 (GTNGKTT) contributes to the ATP binding site. UDP-N-acetyl-alpha-D-muramoyl-L-alanyl-D-glutamate-binding positions include N149, 150–151 (TT), S177, and R185. Position 217 is an N6-carboxylysine (K217). Residues R383, 407–410 (DNPR), G457, and E461 contribute to the meso-2,6-diaminopimelate site. A Meso-diaminopimelate recognition motif motif is present at residues 407-410 (DNPR).

This sequence belongs to the MurCDEF family. MurE subfamily. It depends on Mg(2+) as a cofactor. Post-translationally, carboxylation is probably crucial for Mg(2+) binding and, consequently, for the gamma-phosphate positioning of ATP.

The protein localises to the cytoplasm. The catalysed reaction is UDP-N-acetyl-alpha-D-muramoyl-L-alanyl-D-glutamate + meso-2,6-diaminopimelate + ATP = UDP-N-acetyl-alpha-D-muramoyl-L-alanyl-gamma-D-glutamyl-meso-2,6-diaminopimelate + ADP + phosphate + H(+). It participates in cell wall biogenesis; peptidoglycan biosynthesis. Catalyzes the addition of meso-diaminopimelic acid to the nucleotide precursor UDP-N-acetylmuramoyl-L-alanyl-D-glutamate (UMAG) in the biosynthesis of bacterial cell-wall peptidoglycan. The protein is UDP-N-acetylmuramoyl-L-alanyl-D-glutamate--2,6-diaminopimelate ligase of Bacillus cereus (strain ATCC 14579 / DSM 31 / CCUG 7414 / JCM 2152 / NBRC 15305 / NCIMB 9373 / NCTC 2599 / NRRL B-3711).